The primary structure comprises 677 residues: DNA ligase (677 aa).

NAD(+) is bound by residues 35–39 (DAEFD), 85–86 (SL), and Glu-110. The active-site N6-AMP-lysine intermediate is the Lys-112. Arg-133 and Glu-173 together coordinate NAD(+). A disordered region spans residues 189-210 (QKEGGKPFANPRNAAAGSLRQK). NAD(+) is bound by residues Lys-289 and Lys-313. Residues Cys-407, Cys-410, Cys-426, and Cys-432 each coordinate Zn(2+). In terms of domain architecture, BRCT spans 596-677 (IPDQVLEGLT…FKQLLANGTV (82 aa)).

Belongs to the NAD-dependent DNA ligase family. LigA subfamily. Mg(2+) serves as cofactor. The cofactor is Mn(2+).

The catalysed reaction is NAD(+) + (deoxyribonucleotide)n-3'-hydroxyl + 5'-phospho-(deoxyribonucleotide)m = (deoxyribonucleotide)n+m + AMP + beta-nicotinamide D-nucleotide.. DNA ligase that catalyzes the formation of phosphodiester linkages between 5'-phosphoryl and 3'-hydroxyl groups in double-stranded DNA using NAD as a coenzyme and as the energy source for the reaction. It is essential for DNA replication and repair of damaged DNA. The chain is DNA ligase from Corynebacterium diphtheriae (strain ATCC 700971 / NCTC 13129 / Biotype gravis).